The chain runs to 772 residues: Putative ribosomal protein S6 kinase alpha-2 (772 aa).

The Protein kinase 1 domain occupies 17–284 (FALLRVLGKG…VDEIKNHKFM (268 aa)). ATP contacts are provided by residues 23–31 (LGKGAYGKV) and lysine 49. Aspartate 145 functions as the Proton acceptor in the catalytic mechanism. Phosphoserine; by autocatalysis occurs at positions 180, 342, and 347. One can recognise an AGC-kinase C-terminal domain in the interval 285-353 (SSIDWDAAVK…VSPSVIFAND (69 aa)). Residues 382–653 (KSDAGLLGKG…MQELTAHMWL (272 aa)) form the Protein kinase 2 domain. ATP-binding positions include 388–396 (LGKGAFSVV) and lysine 411. Aspartate 500 (proton acceptor) is an active-site residue. The tract at residues 706-772 (RGIKRQSGDK…IRETRGSDSS (67 aa)) is disordered. A Phosphoserine; by autocatalysis modification is found at serine 712. 2 stretches are compositionally biased toward polar residues: residues 718 to 727 (SGNSKNSRVT) and 739 to 748 (EMTSSTSRPS).

It belongs to the protein kinase superfamily. AGC Ser/Thr protein kinase family. S6 kinase subfamily. Requires Mg(2+) as cofactor.

It catalyses the reaction L-seryl-[protein] + ATP = O-phospho-L-seryl-[protein] + ADP + H(+). The enzyme catalyses L-threonyl-[protein] + ATP = O-phospho-L-threonyl-[protein] + ADP + H(+). Activated by multiple phosphorylations on threonine and serine residues. Its function is as follows. Serine/threonine kinase that may play a role in mediating the mitogen- and stress-induced effects on transcription. May repress transcription via phosphorylation of 'Ser-1' of histone H2A. May phosphorylate histone H3. In Caenorhabditis elegans, this protein is Putative ribosomal protein S6 kinase alpha-2 (rskn-2).